We begin with the raw amino-acid sequence, 89 residues long: NAD(P)H-quinone oxidoreductase subunit L (89 aa).

The next 2 helical transmembrane spans lie at V29–M46 and L59–L79.

Belongs to the complex I NdhL subunit family. As to quaternary structure, NDH-1 can be composed of about 15 different subunits; different subcomplexes with different compositions have been identified which probably have different functions.

It is found in the cellular thylakoid membrane. It catalyses the reaction a plastoquinone + NADH + (n+1) H(+)(in) = a plastoquinol + NAD(+) + n H(+)(out). The catalysed reaction is a plastoquinone + NADPH + (n+1) H(+)(in) = a plastoquinol + NADP(+) + n H(+)(out). In terms of biological role, NDH-1 shuttles electrons from an unknown electron donor, via FMN and iron-sulfur (Fe-S) centers, to quinones in the respiratory and/or the photosynthetic chain. The immediate electron acceptor for the enzyme in this species is believed to be plastoquinone. Couples the redox reaction to proton translocation, and thus conserves the redox energy in a proton gradient. Cyanobacterial NDH-1 also plays a role in inorganic carbon-concentration. In Prochlorococcus marinus (strain NATL1A), this protein is NAD(P)H-quinone oxidoreductase subunit L.